The primary structure comprises 530 residues: Chaperone Ric-8A (530 aa).

Ser-435 is modified (phosphoserine). Phosphothreonine occurs at positions 440 and 442. 4 positions are modified to phosphoserine: Ser-501, Ser-522, Ser-523, and Ser-527.

Belongs to the synembryn family. Interacts with GDP-bound G alpha proteins GNAI1, GNAO1 and GNAQ, and with GNA13 with lower affinity. Does not interact with G-alpha proteins when they are in complex with subunits beta and gamma. Interacts (via C-terminus) with RGS14; the interaction stimulates the dissociation of the complex between RGS14 and the active GTP-bound form of GNAI1. Interacts with NCS1; interaction is favored in the absence of Ca(2+) and myristoylation of NCS1 is not required. Post-translationally, phosphorylated at Ser-435 and Thr-440 by CK2, stabilizing its interface with G alpha proteins.

The protein localises to the cytoplasm. It is found in the cell cortex. Its function is as follows. Chaperone that specifically binds and folds nascent G alpha proteins prior to G protein heterotrimer formation, promoting their stability and activity: folds GNAI1, GNAO1, GNA13 and GNAQ. Does not fold G(s) G-alpha proteins GNAS nor GNAL. Also acts as a guanine nucleotide exchange factor (GEF) for G alpha proteins by stimulating exchange of bound GDP for free GTP. Involved in regulation of microtubule pulling forces during mitotic movement of chromosomes by stimulating G(i)-alpha protein (GNAI1), possibly leading to release G(i)-alpha-GTP and NuMA proteins from the NuMA-GPSM2-G(i)-alpha-GDP complex. Also acts as an activator for G(q)-alpha (GNAQ) protein by enhancing the G(q)-coupled receptor-mediated ERK activation. The sequence is that of Chaperone Ric-8A (RIC8A) from Bos taurus (Bovine).